The sequence spans 82 residues: MARQQEPRKPFKSRPNPLDAAEITYIDYKDTDLLRRFVSDRGKIRGRRVTRISARQQRQVAAAIKNAREMALLPYTGSPAGT.

This sequence belongs to the bacterial ribosomal protein bS18 family. Part of the 30S ribosomal subunit. Forms a tight heterodimer with protein bS6.

Its function is as follows. Binds as a heterodimer with protein bS6 to the central domain of the 16S rRNA, where it helps stabilize the platform of the 30S subunit. In Streptomyces griseus subsp. griseus (strain JCM 4626 / CBS 651.72 / NBRC 13350 / KCC S-0626 / ISP 5235), this protein is Small ribosomal subunit protein bS18A.